Here is a 492-residue protein sequence, read N- to C-terminus: UDP-N-acetylmuramyl-tripeptide synthetase 2 (492 aa).

Residue S30 participates in UDP-N-acetyl-alpha-D-muramoyl-L-alanyl-D-glutamate binding. 111-117 (GTNGKTT) lines the ATP pocket. UDP-N-acetyl-alpha-D-muramoyl-L-alanyl-D-glutamate-binding positions include 154 to 155 (TT), S181, Q187, and R189. K221 is modified (N6-carboxylysine).

The protein belongs to the MurCDEF family. MurE subfamily. Carboxylation is probably crucial for Mg(2+) binding and, consequently, for the gamma-phosphate positioning of ATP.

It localises to the cytoplasm. The protein operates within cell wall biogenesis; peptidoglycan biosynthesis. In terms of biological role, catalyzes the addition of an amino acid to the nucleotide precursor UDP-N-acetylmuramoyl-L-alanyl-D-glutamate (UMAG) in the biosynthesis of bacterial cell-wall peptidoglycan. This is UDP-N-acetylmuramyl-tripeptide synthetase 2 from Oceanobacillus iheyensis (strain DSM 14371 / CIP 107618 / JCM 11309 / KCTC 3954 / HTE831).